The sequence spans 374 residues: SH2 domain-containing protein 2A (374 aa).

The SH2 domain occupies 116-207 (WFHGFITRRE…PYGEILTQPL (92 aa)). A disordered region spans residues 213–232 (EPAGLSLRADSDSGSKRQDP). Positions 221–232 (ADSDSGSKRQDP) are enriched in basic and acidic residues. Position 237 is a phosphoserine (Ser237). The tract at residues 241–301 (QQGQAQASGH…QAPPINPIYQ (61 aa)) is disordered. Positions 256–266 (ASQQKATSQAS) are enriched in polar residues. Positions 267–273 (RPRPPIP) match the SH3-binding motif. Positions 268–279 (PRPPIPAKPQLP) are enriched in pro residues. The residue at position 316 (Ser316) is a Phosphoserine. 2 disordered regions span residues 321–340 (PSNI…IGHP) and 353–374 (GQVR…GSPS).

In terms of assembly, interacts with KDR. Interacts with p56-LCK, TXK and ITK. Phosphorylated on tyrosine residues upon TCR-stimulation. Expression limited to tissues of the immune system and, in particular, activated T-cells and natural killer cells. Expressed in the thymus, lymph node, and to a lesser extent, in the spleen and bone marrow. According to PubMed:10553045, also expressed in the lung.

The protein resides in the cytoplasm. Its subcellular location is the cell membrane. Could be a T-cell-specific adapter protein involved in the control of T-cell activation. May play a role in p56-LCK-mediated T-cell signaling. Could be involved in the regulation of responses to T-cell activation stimuli, specifically proliferation and lymphokine production. Interactions with ITK and TXK may provide important biochemical links of these two important kinases with other components in the T-cell activation machinery. In Mus musculus (Mouse), this protein is SH2 domain-containing protein 2A (Sh2d2a).